The chain runs to 595 residues: MLHTINYRSWHLAARQLGRSTFRKFTTESSTKSPIADVCFAFDSIDGVLIRGGRGLKEGTKTLKFLQKNNIPFILLTNGGGMHESVRAQRLSKTLSVSLTEDDFCQSHTPFRALADKYKHVLVLGGKDNSVRETAEKYGFKSVINELDVIAKLGTPFWPFTSFNEEDIKDAKDFDVTRPIEAVFTYVDPVRLGLDLQLVMELGQSKNGVLGTVSKTANEGPDIYFSNADLIWPNEYPLPRLGQGAFAICCESVFKELTGKDLRNTKYGKPHKLTYDYAKNILMKKHKTLGITNPPKEIFMVGDNPESDIRGANNYGWTSILVRTGIFQGDNSPKYSAKHVSDNVWEGVRWALSKHVPAAKLNKSMGEVRGFHTSSRVLNTVTKSNNSKPIQRPLRENIFTLPNLLTFSRLLSAPLIAYLYIYDYTKAAACFFLYAGFTDLVDGYIARKFDLGSIAGTVLDPLADKTLMTCLTICLAVRETMPLTLASLIIGRDVLLVSAVSYLRYKSLPAPKTFRRFFDFAIPTTELKPTRISKWNTALQLLLLGLLITEPILPFDASFAKSPLFYIVGCTTIASGASYCISRNTFRNIGKSKLQ.

The transit peptide at 1-24 (MLHTINYRSWHLAARQLGRSTFRK) directs the protein to the mitochondrion. 2 consecutive transmembrane segments (helical) span residues 538 to 560 (ALQLLLLGLLITEPILPFDASFA) and 564 to 586 (LFYIVGCTTIASGASYCISRNTF).

It in the N-terminal section; belongs to the HAD-like hydrolase superfamily. This sequence in the C-terminal section; belongs to the CDP-alcohol phosphatidyltransferase class-I family. Requires Mg(2+) as cofactor. In terms of processing, proteolytically cleaved, presumably during its import into the mitochondrion by mitochondrial processing peptidase.

The protein resides in the mitochondrion. Its subcellular location is the mitochondrion inner membrane. It carries out the reaction a CDP-1,2-diacyl-sn-glycerol + a 1,2-diacyl-sn-glycero-3-phospho-(1'-sn-glycerol) = a cardiolipin + CMP + H(+). Functionally, catalyzes the synthesis of cardiolipin (CL) (diphosphatidylglycerol) by specifically transferring a phosphatidyl group from CDP-diacylglycerol to phosphatidylglycerol (PG). CL is a key phospholipid in mitochondrial membranes and plays important roles in maintaining the functional integrity and dynamics of mitochondria under both optimal and stress conditions. In terms of biological role, activity is dispensable for viability. The chain is Cardiolipin synthase (CMP-forming) / mitochondrial hydrolase fusion protein from Schizosaccharomyces pombe (strain 972 / ATCC 24843) (Fission yeast).